We begin with the raw amino-acid sequence, 876 residues long: Alanine--tRNA ligase (876 aa).

Residues 2 to 461 (SKSTAEIRQA…VDSASEFKGY (460 aa)) form a catalytic region. At K74 the chain carries N6-acetyllysine. The tract at residues 553–705 (DEARRARIRL…EAVTGEGAIA (153 aa)) is editing. Zn(2+) is bound by residues H564, H568, C666, and H670. Positions 699 to 808 (TGEGAIATVH…STIIVLATVV (110 aa)) are important for oligomerization. The interval 766–875 (IDVNGVKLLV…SVKGWVSAKL (110 aa)) is C-Ala domain.

This sequence belongs to the class-II aminoacyl-tRNA synthetase family. Homotetramer. Zn(2+) is required as a cofactor.

The protein resides in the cytoplasm. It catalyses the reaction tRNA(Ala) + L-alanine + ATP = L-alanyl-tRNA(Ala) + AMP + diphosphate. It carries out the reaction (S)-lactate + ATP + H(+) = (S)-lactoyl-AMP + diphosphate. The catalysed reaction is (S)-lactoyl-AMP + L-lysyl-[protein] = N(6)-[(S)-lactoyl]-L-lysyl-[protein] + AMP + 2 H(+). Acetylation at Lys-74 decreases the alanylation activity for tRNA(Ala); a protein that is fully acetylated is inactive in vitro. Its function is as follows. Catalyzes the attachment of L-alanine to tRNA(Ala) in a two-step reaction: L-alanine is first activated by ATP to form Ala-AMP and then transferred to the acceptor end of tRNA(Ala). AlaRS also incorrectly activates the sterically smaller amino acid glycine as well as the sterically larger amino acid L-serine; generates 2-fold more mischarged Gly than Ser. These mischarged amino acids occur because the of inherent physicochemical limitations on discrimination between closely related amino acids (Ala, Gly and Ser) in the charging step. In presence of high levels of lactate, also acts as a protein lactyltransferase that mediates lactylation of lysine residues in target proteins. In terms of biological role, edits mischarged Ser-tRNA(Ala) and Gly-tRNA(Ala) but not incorrectly charged Ser-tRNA(Thr). Dtd edits Gly-tRNA(Ala) 4-fold better than does AlaRS. Functionally, attaches Ala to transfer-messenger RNA (tmRNA, also known as 10Sa RNA, the product of the ssrA gene). tmRNA plays a major role in rescue of stalled ribosomes via trans-translation. In Escherichia coli (strain K12), this protein is Alanine--tRNA ligase (alaS).